The primary structure comprises 204 residues: Quinol oxidase subunit 3 (204 aa).

5 helical membrane passes run 27–47 (FWIFLGAEIVLFSTLFATFFV), 66–86 (LVMIMTFLLLISSFTCGIAVH), 95–115 (GVVIWTIITLLLGAGFVGCEI), 140–160 (LLGTHGTHVTIGIFWIIGILI), and 184–204 (FLDVVWIFIFTGVYLMGLGGL).

This sequence belongs to the cytochrome c oxidase subunit 3 family.

It is found in the cell membrane. The catalysed reaction is 2 a quinol + O2 = 2 a quinone + 2 H2O. Catalyzes quinol oxidation with the concomitant reduction of oxygen to water. Major component for energy conversion during vegetative growth. The polypeptide is Quinol oxidase subunit 3 (qoxC) (Bacillus spizizenii (strain ATCC 23059 / NRRL B-14472 / W23) (Bacillus subtilis subsp. spizizenii)).